The following is a 161-amino-acid chain: Extracellular giant hemoglobin major globin subunit B1 (161 aa).

Positions 1 to 16 (MTILVLFLSCAALASA) are cleaved as a signal peptide. The 144-residue stretch at 18-161 (CCSRGDAEVV…YIAAGIGAGL (144 aa)) folds into the Globin domain. A disulfide bridge links cysteine 19 with cysteine 149. Residue histidine 112 participates in heme b binding.

It belongs to the globin family. In terms of assembly, the 400 kDa hemoglobin consists of a spherical 24-mer arranged as a double layer of dome-shaped dodecamers. Each dodecamer is composed of the 3-fold trimer of the tetramer A1-A2-B1-B2 having one intra-tetramer (A1-B2) disulfide bond and one inter-tetramer (B1-B2) disulfide bond per tetramer.

The protein resides in the secreted. The extracellular giant hemoglobin is able to bind and transport oxygen and sulfide simultaneously and reversibly at two different sites. The protein is Extracellular giant hemoglobin major globin subunit B1 (ghbB1) of Oligobrachia mashikoi (Beard worm).